The sequence spans 626 residues: Nuclear RNA export factor 2 (626 aa).

Ser34 carries the post-translational modification Phosphoserine. In terms of domain architecture, RRM spans 124–203; the sequence is WFKVTIPYGI…IFVNHSTAPY (80 aa). 4 LRR repeats span residues 271-296, 297-320, 321-348, and 349-376; these read ELLS…EKAP, KVKT…VKGL, KLEE…AIRD, and CFPK…ETMK. An NTF2 domain is found at 391-541; it reads LVLQFLQQYY…LCIVNDELFV (151 aa). The TAP-C domain occupies 570–625; the sequence is QEQQEMVQAFSAQSGMKLEWSQKCLQDNEWNYTRAGQAFTMLQTEGKIPAEAFKQI.

Belongs to the NXF family. As to quaternary structure, interacts with NXT1, NXT2, E1B-AP5, the REF proteins and with nucleoporins, Nup62, Nup153 and Nup214. Interacts with LUZP4. Expressed almost exclusively in testis. Also expressed in several cancers.

The protein resides in the nucleus. It localises to the nucleoplasm. Its subcellular location is the cytoplasm. Involved in the export of mRNA from the nucleus to the cytoplasm. The chain is Nuclear RNA export factor 2 (NXF2) from Homo sapiens (Human).